The sequence spans 594 residues: (E)-beta-ocimene synthase TPS6FN (594 aa).

The (2E)-geranyl diphosphate site is built by R303, D340, D344, R489, and N492. Mg(2+) is bound by residues D340 and D344. Positions 340-344 match the DDXXD motif motif; sequence DDIYD. Mg(2+) is bound by residues N492, T496, and E500.

Belongs to the terpene synthase family. Tpsb subfamily. Requires Mg(2+) as cofactor. Mn(2+) serves as cofactor. As to expression, expressed in glandular trichomes two to four weeks after flowering onset.

The catalysed reaction is (2E)-geranyl diphosphate = (E)-beta-ocimene + diphosphate. The enzyme catalyses (2E)-geranyl diphosphate = (Z)-beta-ocimene + diphosphate. Its pathway is secondary metabolite biosynthesis; terpenoid biosynthesis. In terms of biological role, involved in monoterpene (C10) olefins biosynthesis, constituants of cannabinoids and terpenoids-rich resins. Catalyzes mainly the conversion of (2E)-geranyl diphosphate to (E)-beta-ocimene, and also produces minor products such as (Z)-beta-ocimene. This chain is (E)-beta-ocimene synthase TPS6FN, found in Cannabis sativa (Hemp).